Consider the following 160-residue polypeptide: Nucleotide-binding protein VP1617 (160 aa).

It belongs to the YajQ family.

Its function is as follows. Nucleotide-binding protein. The protein is Nucleotide-binding protein VP1617 of Vibrio parahaemolyticus serotype O3:K6 (strain RIMD 2210633).